We begin with the raw amino-acid sequence, 222 residues long: Glutathione S-transferase 3 (222 aa).

A GST N-terminal domain is found at 2 to 83 (APLKLYGMPL…YIASKYASEG (82 aa)). Glutathione contacts are provided by residues serine 12, 13-14 (PN), 41-42 (HK), 54-55 (QI), and 67-68 (ES). The 131-residue stretch at 89-219 (ATASAAKLEV…AAIPLPPPPS (131 aa)) folds into the GST C-terminal domain.

It belongs to the GST superfamily. Phi family. Homodimer.

The catalysed reaction is RX + glutathione = an S-substituted glutathione + a halide anion + H(+). Conjugation of reduced glutathione to a wide number of exogenous and endogenous hydrophobic electrophiles. Involved in the detoxification of certain herbicides. The sequence is that of Glutathione S-transferase 3 from Zea mays (Maize).